Here is a 195-residue protein sequence, read N- to C-terminus: Ribonuclease HII (195 aa).

One can recognise an RNase H type-2 domain in the interval 8-195 (WGVVGVDEAG…FAPVRRLLGG (188 aa)). 3 residues coordinate a divalent metal cation: Asp-14, Glu-15, and Asp-106.

It belongs to the RNase HII family. Mn(2+) serves as cofactor. The cofactor is Mg(2+).

Its subcellular location is the cytoplasm. The catalysed reaction is Endonucleolytic cleavage to 5'-phosphomonoester.. In terms of biological role, endonuclease that specifically degrades the RNA of RNA-DNA hybrids. The chain is Ribonuclease HII from Halorhodospira halophila (strain DSM 244 / SL1) (Ectothiorhodospira halophila (strain DSM 244 / SL1)).